Consider the following 465-residue polypeptide: Cerebellar degeneration-related protein 2-like (465 aa).

Coiled coils occupy residues 38–143 and 188–265; these read LLER…EQLR and LEQE…TYLL. The interval 282–314 is disordered; that stretch reads APEADDPQPGRGDDLGAQDGVSSPAASPGHVVR. A phosphoserine mark is found at Ser-308, Ser-318, and Ser-344. Residues 350–377 adopt a coiled-coil conformation; that stretch reads MSILREVDEQYHALLEKYEELLSKCRQH. The disordered stretch occupies residues 382 to 417; it reads RHAGVQTSRPISRDSSWRDLRGGEEGQGEVKAGEKS. Over residues 392–405 the composition is skewed to basic and acidic residues; the sequence is ISRDSSWRDLRGGE.

This sequence belongs to the CDR2 family.

The sequence is that of Cerebellar degeneration-related protein 2-like (CDR2L) from Homo sapiens (Human).